The primary structure comprises 101 residues: NADH-quinone oxidoreductase subunit K (101 aa).

A run of 3 helical transmembrane segments spans residues 5–25 (LGQV…GVLL), 29–49 (LIMI…VLVG), and 62–82 (VALL…ALVV).

This sequence belongs to the complex I subunit 4L family. In terms of assembly, NDH-1 is composed of 14 different subunits. Subunits NuoA, H, J, K, L, M, N constitute the membrane sector of the complex.

The protein resides in the cell inner membrane. The catalysed reaction is a quinone + NADH + 5 H(+)(in) = a quinol + NAD(+) + 4 H(+)(out). Its function is as follows. NDH-1 shuttles electrons from NADH, via FMN and iron-sulfur (Fe-S) centers, to quinones in the respiratory chain. The immediate electron acceptor for the enzyme in this species is believed to be ubiquinone. Couples the redox reaction to proton translocation (for every two electrons transferred, four hydrogen ions are translocated across the cytoplasmic membrane), and thus conserves the redox energy in a proton gradient. The protein is NADH-quinone oxidoreductase subunit K of Syntrophotalea carbinolica (strain DSM 2380 / NBRC 103641 / GraBd1) (Pelobacter carbinolicus).